The sequence spans 457 residues: UDP-glycosyltransferase 72C1 (457 aa).

UDP-alpha-D-glucose is bound by residues Ser272, 343-344, 361-369, and 383-386; these read WA, HCGWNSVLE, and YSEQ.

The protein belongs to the UDP-glycosyltransferase family.

The sequence is that of UDP-glycosyltransferase 72C1 (UGT72C1) from Arabidopsis thaliana (Mouse-ear cress).